The following is a 282-amino-acid chain: Protein canopy homolog 3 (282 aa).

An N-terminal signal peptide occupies residues 1 to 33 (MEPLPEPASGPRPRPHRLLLLSLLLLLLPLLPA). The region spanning 53–275 (SKCEVCKYVA…EGIQKASPLT (223 aa)) is the Saposin B-type domain. 3 disulfides stabilise this stretch: Cys-55–Cys-212, Cys-58–Cys-200, and Cys-110–Cys-172. N-linked (GlcNAc...) asparagine glycosylation is present at Asn-159. A coiled-coil region spans residues 159-185 (NETSAEVADLKKQCDVLVEEFEEVIED). Positions 221 to 282 (KGDTAALGGK…PLTHSPPDEL (62 aa)) are disordered. Residues 255–266 (DLDGDPSPEEDE) are compositionally biased toward acidic residues.

The protein belongs to the canopy family. Interacts with HSP90B1; this interaction is disrupted in the presence of ATP. Interacts with TLR1, TLR2, TLR4 and TLR9.

It is found in the endoplasmic reticulum. Functionally, toll-like receptor (TLR)-specific co-chaperone for HSP90B1. Required for proper TLR folding, except that of TLR3, and hence controls TLR exit from the endoplasmic reticulum. Consequently, required for both innate and adaptive immune responses. In Bos taurus (Bovine), this protein is Protein canopy homolog 3 (CNPY3).